Reading from the N-terminus, the 420-residue chain is Glycogen synthase kinase-3 beta (420 aa).

The segment covering 1 to 22 has biased composition (polar residues); that stretch reads MSGRPRTTSFAESCKPVQQPSA. The segment at 1-53 is disordered; the sequence is MSGRPRTTSFAESCKPVQQPSAFGSMKVSRDKDGSKVTTVVATPGQGPDRPQE. Residue Ser-9 is modified to Phosphoserine; by PKB/AKT1, RPS6KA3 and SGK3. A lipid anchor (S-palmitoyl cysteine) is attached at Cys-14. The Protein kinase domain maps to 56–340; the sequence is YTDTKVIGNG…PLEACAHSFF (285 aa). ATP is bound by residues 62–70 and Lys-85; that span reads IGNGSFGVV. Residue Asp-181 is the Proton acceptor of the active site. Tyr-216 bears the Phosphotyrosine mark. The disordered stretch occupies residues 385–420; it reads QAAASPPANATAASDTNAGDRGQTNNAASASASNST. Low complexity-rich tracts occupy residues 386–401 and 409–420; these read AAAS…SDTN and NNAASASASNST. Ser-389 bears the Phosphoserine mark.

The protein belongs to the protein kinase superfamily. CMGC Ser/Thr protein kinase family. GSK-3 subfamily. Monomer. Interacts with DAB2IP (via C2 domain); the interaction stimulates GSK3B kinase activation. Interacts (via C2 domain) with PPP2CA. Interacts with ARRB2, AXIN1, CABYR, DISC1, MMP2, MUC1, NIN, PRUNE1 and ZBED3. Interacts with AXIN1; the interaction mediates hyperphosphorylation of CTNNB1 leading to its ubiquitination and destruction. Interacts with and phosphorylates SNAI1. Interacts with DNM1L (via a C-terminal domain). Found in a complex composed of MACF1, APC, AXIN1, CTNNB1 and GSK3B. Interacts with SGK3. Interacts with the CLOCK-BMAL1 heterodimer. Interacts with the BMAL1. Interacts with CTNND2. The complex composed, at least, of APC, CTNNB1 and GSK3B interacts with JPT1; the interaction requires the inactive form of GSK3B (phosphorylated at 'Ser-9'). Forms a complex composed of PRKAR2A or PRKAR2B, GSK3B and GSKIP through GSKIP interaction; facilitates PKA-induced phosphorylation and regulates GSK3B activity. Interacts with GSKIP. Interacts with GID8. Interacts with PIWIL2. Interacts with LMBR1L. Interacts with DDX3X. Interacts with BIRC2. Interacts with TNFRSF10B; TNFRSF10B stimulation inhibits GSK3B kinase activity. Found in a complex with SLC39A6, SLC39A10 and with GSK3B that controls NCAM1 phosphorylation. Interacts with PKP3 (via ARM repeats); the interaction may be involved in PKP3 protein degradation. Phosphorylated by AKT1 and ILK1. Upon insulin-mediated signaling, the activated PKB/AKT1 and RPS6KA3 protein kinases phosphorylate and deactivate GSK3B, resulting in the dephosphorylation and activation of GYS1. Activated by phosphorylation at Tyr-216. Inactivated by phosphorylation at Ser-9. Phosphorylated in a circadian manner in the hippocampus. In terms of processing, mono-ADP-ribosylation by PARP10 negatively regulates kinase activity. Post-translationally, palmitoylated. Palmitoylation by ZDHHC4 prevents AKT1-mediated phosphorylation.

It is found in the cytoplasm. Its subcellular location is the nucleus. The protein resides in the membrane. It localises to the cell membrane. The enzyme catalyses L-seryl-[tau protein] + ATP = O-phospho-L-seryl-[tau protein] + ADP + H(+). It catalyses the reaction L-threonyl-[tau protein] + ATP = O-phospho-L-threonyl-[tau protein] + ADP + H(+). It carries out the reaction L-seryl-[protein] + ATP = O-phospho-L-seryl-[protein] + ADP + H(+). The catalysed reaction is L-threonyl-[protein] + ATP = O-phospho-L-threonyl-[protein] + ADP + H(+). Activated by phosphorylation at Tyr-216. In response to insulin, inhibited by phosphorylation at Ser-9 by PKB/AKT1; phosphorylation at this site causes a conformational change, preventing access of substrates to the active site. Inhibited by IL22 treatment which also triggers phosphorylation at Ser-9, promoting inactivation. Inhibited by lithium. Functionally, constitutively active protein kinase that acts as a negative regulator in the hormonal control of glucose homeostasis, Wnt signaling and regulation of transcription factors and microtubules, by phosphorylating and inactivating glycogen synthase (GYS1 or GYS2), EIF2B, CTNNB1/beta-catenin, APC, AXIN1, DPYSL2/CRMP2, JUN, NFATC1/NFATC, MAPT/TAU and MACF1. Requires primed phosphorylation of the majority of its substrates. In skeletal muscle, contributes to insulin regulation of glycogen synthesis by phosphorylating and inhibiting GYS1 activity and hence glycogen synthesis. May also mediate the development of insulin resistance by regulating activation of transcription factors. Regulates protein synthesis by controlling the activity of initiation factor 2B (EIF2BE/EIF2B5) in the same manner as glycogen synthase. In Wnt signaling, GSK3B forms a multimeric complex with APC, AXIN1 and CTNNB1/beta-catenin and phosphorylates the N-terminus of CTNNB1 leading to its degradation mediated by ubiquitin/proteasomes. Phosphorylates JUN at sites proximal to its DNA-binding domain, thereby reducing its affinity for DNA. Phosphorylates NFATC1/NFATC on conserved serine residues promoting NFATC1/NFATC nuclear export, shutting off NFATC1/NFATC gene regulation, and thereby opposing the action of calcineurin. Phosphorylates MAPT/TAU on 'Thr-548', decreasing significantly MAPT/TAU ability to bind and stabilize microtubules. MAPT/TAU is the principal component of neurofibrillary tangles in Alzheimer disease. Plays an important role in ERBB2-dependent stabilization of microtubules at the cell cortex. Phosphorylates MACF1, inhibiting its binding to microtubules which is critical for its role in bulge stem cell migration and skin wound repair. Probably regulates NF-kappa-B (NFKB1) at the transcriptional level and is required for the NF-kappa-B-mediated anti-apoptotic response to TNF-alpha (TNF/TNFA). Negatively regulates replication in pancreatic beta-cells, resulting in apoptosis, loss of beta-cells and diabetes. Through phosphorylation of the anti-apoptotic protein MCL1, may control cell apoptosis in response to growth factors deprivation. Phosphorylates MUC1 in breast cancer cells, decreasing the interaction of MUC1 with CTNNB1/beta-catenin. Is necessary for the establishment of neuronal polarity and axon outgrowth. Phosphorylates MARK2, leading to inhibition of its activity. Phosphorylates SIK1 at 'Thr-182', leading to sustainment of its activity. Phosphorylates ZC3HAV1 which enhances its antiviral activity. Phosphorylates SNAI1, leading to its ubiquitination and proteasomal degradation. Phosphorylates SFPQ at 'Thr-687' upon T-cell activation. Phosphorylates NR1D1 st 'Ser-55' and 'Ser-59' and stabilizes it by protecting it from proteasomal degradation. Regulates the circadian clock via phosphorylation of the major clock components including BMAL1, CLOCK and PER2. Phosphorylates CLOCK AT 'Ser-427' and targets it for proteasomal degradation. Phosphorylates BMAL1 at 'Ser-17' and 'Ser-21' and primes it for ubiquitination and proteasomal degradation. Phosphorylates FBXL2 at 'Thr-404' and primes it for ubiquitination by the SCF(FBXO3) complex and proteasomal degradation. Phosphorylates OGT at 'Ser-3' or 'Ser-4' which positively regulates its activity. Phosphorylates MYCN in neuroblastoma cells which may promote its degradation. Regulates the circadian rhythmicity of hippocampal long-term potentiation and BMAL1 and PER2 expression. Acts as a regulator of autophagy by mediating phosphorylation of KAT5/TIP60 under starvation conditions, activating KAT5/TIP60 acetyltransferase activity and promoting acetylation of key autophagy regulators, such as ULK1 and RUBCNL/Pacer. Negatively regulates extrinsic apoptotic signaling pathway via death domain receptors. Promotes the formation of an anti-apoptotic complex, made of DDX3X, BRIC2 and GSK3B, at death receptors, including TNFRSF10B. The anti-apoptotic function is most effective with weak apoptotic signals and can be overcome by stronger stimulation. Phosphorylates E2F1, promoting the interaction between E2F1 and USP11, stabilizing E2F1 and promoting its activity. Phosphorylates mTORC2 complex component RICTOR at 'Ser-1235' in response to endoplasmic stress, inhibiting mTORC2. Phosphorylates FXR1, promoting FXR1 ubiquitination by the SCF(FBXO4) complex and FXR1 degradation by the proteasome. Phosphorylates interleukin-22 receptor subunit IL22RA1, preventing its proteasomal degradation. The polypeptide is Glycogen synthase kinase-3 beta (Rattus norvegicus (Rat)).